A 345-amino-acid chain; its full sequence is Protein GAMETE CELL DEFECTIVE 1, mitochondrial (345 aa).

The N-terminal 43 residues, 1–43 (MLALRKTLLHGRLPAAPPAAAAAAIASRIPALLRRLSSSPGDG), are a transit peptide targeting the mitochondrion. Residues 36–81 (LSSSPGDGQGGDEWGSSWSTGITKEHFDGSDAAVGRPVTSPSKPVS) are disordered.

In terms of tissue distribution, expressed in roots, stems, leaves and florets.

The protein resides in the mitochondrion. In terms of biological role, essential for fertility (male and female gametophyte functions and development). Required for the integrity of female gametic mitochondria. Involved in embryo apical-basal patterning, and particularly dorsal-ventral patterning, during early embryogenesis, and endosperm free nucleus positioning and development as well as early endosperm development, probably by modulating the expression pattern of related genes (e.g. AL1, MYB3/AL2, CYP78A13/GE, PNH1, HAZ1, MPK6 and OSH1). Has function in triggering of endosperm programmed cell death (PCD) leading to syncytial endosperm cellularization and starchy endosperm cell maturation. Implicated in central vacuole dynamics necessary for microspore development leading to pollen production, and for pollen development and germination. The sequence is that of Protein GAMETE CELL DEFECTIVE 1, mitochondrial from Oryza sativa subsp. japonica (Rice).